Consider the following 251-residue polypeptide: Probable transcriptional regulatory protein SYO3AOP1_0685 (251 aa).

This sequence belongs to the TACO1 family.

The protein localises to the cytoplasm. This is Probable transcriptional regulatory protein SYO3AOP1_0685 from Sulfurihydrogenibium sp. (strain YO3AOP1).